Consider the following 427-residue polypeptide: Glutamate-1-semialdehyde 2,1-aminomutase (427 aa).

The residue at position 267 (Lys267) is an N6-(pyridoxal phosphate)lysine.

It belongs to the class-III pyridoxal-phosphate-dependent aminotransferase family. HemL subfamily. As to quaternary structure, homodimer. Requires pyridoxal 5'-phosphate as cofactor.

The protein localises to the cytoplasm. The catalysed reaction is (S)-4-amino-5-oxopentanoate = 5-aminolevulinate. The protein operates within porphyrin-containing compound metabolism; protoporphyrin-IX biosynthesis; 5-aminolevulinate from L-glutamyl-tRNA(Glu): step 2/2. The protein is Glutamate-1-semialdehyde 2,1-aminomutase of Sulfurihydrogenibium azorense (strain DSM 15241 / OCM 825 / Az-Fu1).